Here is a 217-residue protein sequence, read N- to C-terminus: Ras-related protein Rab-19 (217 aa).

GTP-binding residues include serine 26, valine 28, glycine 29, lysine 30, threonine 31, cysteine 32, tyrosine 42, threonine 43, glutamate 44, threonine 45, and threonine 49. Threonine 31 serves as a coordination point for Mg(2+). Positions serine 39–phenylalanine 54 match the Switch 1 motif. Positions 49 and 72 each coordinate Mg(2+). Positions alanine 74–serine 89 match the Switch 2 motif. Positions 75, 130, 131, 133, 161, 162, and 163 each coordinate GTP. 2 S-geranylgeranyl cysteine lipidation sites follow: cysteine 215 and cysteine 217. The residue at position 217 (cysteine 217) is a Cysteine methyl ester.

It belongs to the small GTPase superfamily. Rab family. Mg(2+) is required as a cofactor.

The protein localises to the cell membrane. The catalysed reaction is GTP + H2O = GDP + phosphate + H(+). Regulated by guanine nucleotide exchange factors (GEFs) which promote the exchange of bound GDP for free GTP. Regulated by GTPase activating proteins (GAPs) which increase the GTP hydrolysis activity. Inhibited by GDP dissociation inhibitors (GDIs). In terms of biological role, the small GTPases Rab are key regulators of intracellular membrane trafficking, from the formation of transport vesicles to their fusion with membranes. Rabs cycle between an inactive GDP-bound form and an active GTP-bound form that is able to recruit to membranes different set of downstream effectors directly responsible for vesicle formation, movement, tethering and fusion. The protein is Ras-related protein Rab-19 of Homo sapiens (Human).